The primary structure comprises 420 residues: Probable glucuronosyltransferase Os04g0398600 (420 aa).

Topologically, residues 1–4 are cytoplasmic; sequence MGSR. Residues 5–25 traverse the membrane as a helical; Signal-anchor for type II membrane protein segment; the sequence is TVGWWLLAAAVVLAAAAADSG. The Lumenal portion of the chain corresponds to 26 to 420; sequence EAERAAEQHS…AGPVGDLKAW (395 aa). N147 and N408 each carry an N-linked (GlcNAc...) asparagine glycan.

The protein belongs to the glycosyltransferase 47 family.

It is found in the golgi apparatus membrane. Involved in the synthesis of glucuronoxylan hemicellulose in secondary cell walls. The polypeptide is Probable glucuronosyltransferase Os04g0398600 (Oryza sativa subsp. japonica (Rice)).